The following is a 75-amino-acid chain: Small ribosomal subunit protein bS18 (75 aa).

This sequence belongs to the bacterial ribosomal protein bS18 family. Part of the 30S ribosomal subunit. Forms a tight heterodimer with protein bS6.

Functionally, binds as a heterodimer with protein bS6 to the central domain of the 16S rRNA, where it helps stabilize the platform of the 30S subunit. This Psychrobacter sp. (strain PRwf-1) protein is Small ribosomal subunit protein bS18.